Here is a 918-residue protein sequence, read N- to C-terminus: Protein SEY1 homolog (918 aa).

Residues 1-701 (MESSNHLPNK…AGTSVSSWRN (701 aa)) lie on the Cytoplasmic side of the membrane. Residues 46–280 (GFKFNVVTIL…VPSDGFFVYS (235 aa)) form the GB1/RHD3-type G domain. 56–63 (GSQSSGKS) is a GTP binding site. The stretch at 554-626 (SLVLLLKATQ…DALTLLQVLK (73 aa)) forms a coiled coil. The chain crosses the membrane as a helical span at residues 702–722 (IPPVFWLVLLVLGWNELRAAF). At 723–725 (RVL) the chain is on the lumenal side. Residues 726–746 (LKFYILIPLLIVSYFTFSYSA) form a helical membrane-spanning segment. Residues 747–918 (NKLLGPKANE…CGKAVHLAQW (172 aa)) are Cytoplasmic-facing.

The protein belongs to the TRAFAC class dynamin-like GTPase superfamily. GB1/RHD3 GTPase family. RHD3 subfamily.

It is found in the endoplasmic reticulum membrane. Functionally, probable GTP-binding protein that may be involved in cell development. This chain is Protein SEY1 homolog, found in Theileria annulata.